We begin with the raw amino-acid sequence, 375 residues long: Glycogen synthase kinase-3 homolog YGK3 (375 aa).

One can recognise a Protein kinase domain in the interval 41-329; the sequence is VREGKRIGHG…ARQLMAHEFF (289 aa). ATP contacts are provided by residues 47–55 and K74; that span reads IGHGSFGTV. The active-site Proton acceptor is D173. S211 is modified (phosphoserine).

This sequence belongs to the protein kinase superfamily. Ser/Thr protein kinase family.

It carries out the reaction L-seryl-[protein] + ATP = O-phospho-L-seryl-[protein] + ADP + H(+). The enzyme catalyses L-threonyl-[protein] + ATP = O-phospho-L-threonyl-[protein] + ADP + H(+). In terms of biological role, required for heat stress-instigated phosphorylation of BCY1 which is involved in cell wall integrity signaling. Regulates activity of MSN2, a transcription factor that binds to the stress-response element (STRE). Probably promotes formation of a complex between MSN2 and DNA. Regulates the stability of ROG1. The protein is Glycogen synthase kinase-3 homolog YGK3 (YGK3) of Saccharomyces cerevisiae (strain ATCC 204508 / S288c) (Baker's yeast).